We begin with the raw amino-acid sequence, 198 residues long: dITP/XTP pyrophosphatase (198 aa).

7 to 12 (THNPHK) contributes to the substrate binding site. Residues Glu-40 and Asp-69 each coordinate Mg(2+). Asp-69 (proton acceptor) is an active-site residue. Residues Thr-70, 151–154 (FGYD), Lys-174, and 179–180 (HR) each bind substrate.

Belongs to the HAM1 NTPase family. As to quaternary structure, homodimer. The cofactor is Mg(2+).

It carries out the reaction XTP + H2O = XMP + diphosphate + H(+). The enzyme catalyses dITP + H2O = dIMP + diphosphate + H(+). The catalysed reaction is ITP + H2O = IMP + diphosphate + H(+). Pyrophosphatase that catalyzes the hydrolysis of nucleoside triphosphates to their monophosphate derivatives, with a high preference for the non-canonical purine nucleotides XTP (xanthosine triphosphate), dITP (deoxyinosine triphosphate) and ITP. Seems to function as a house-cleaning enzyme that removes non-canonical purine nucleotides from the nucleotide pool, thus preventing their incorporation into DNA/RNA and avoiding chromosomal lesions. This Thermoanaerobacter pseudethanolicus (strain ATCC 33223 / 39E) (Clostridium thermohydrosulfuricum) protein is dITP/XTP pyrophosphatase.